Consider the following 400-residue polypeptide: Enoyl-[acyl-carrier-protein] reductase [NADH] (400 aa).

Residues 48–53 (GASTGY), 74–75 (FE), 111–112 (DA), and 139–140 (LA) contribute to the NAD(+) site. Residue Tyr225 coordinates substrate. Catalysis depends on Tyr235, which acts as the Proton donor. NAD(+) is bound by residues Lys244 and 273–275 (VVT).

The protein belongs to the TER reductase family. As to quaternary structure, monomer.

It carries out the reaction a 2,3-saturated acyl-[ACP] + NAD(+) = a (2E)-enoyl-[ACP] + NADH + H(+). The protein operates within lipid metabolism; fatty acid biosynthesis. Involved in the final reduction of the elongation cycle of fatty acid synthesis (FAS II). Catalyzes the reduction of a carbon-carbon double bond in an enoyl moiety that is covalently linked to an acyl carrier protein (ACP). The protein is Enoyl-[acyl-carrier-protein] reductase [NADH] of Burkholderia cenocepacia (strain HI2424).